Consider the following 609-residue polypeptide: Phosphoenolpyruvate carboxykinase [GTP] (609 aa).

Substrate-binding positions include Arg-81 and 220-222 (YGG). Mn(2+) contacts are provided by Lys-229 and His-249. A substrate-binding site is contributed by Ser-271. 272–277 (ACGKTN) contributes to the GTP binding site. Residue Cys-273 is part of the active site. Residue Asp-296 participates in Mn(2+) binding. 387–389 (NSR) serves as a coordination point for substrate. GTP contacts are provided by residues Arg-389, Arg-420, and 515–518 (FGEN).

This sequence belongs to the phosphoenolpyruvate carboxykinase [GTP] family. As to quaternary structure, monomer. The cofactor is Mn(2+).

The protein resides in the cytoplasm. The catalysed reaction is oxaloacetate + GTP = phosphoenolpyruvate + GDP + CO2. Its pathway is carbohydrate biosynthesis; gluconeogenesis. Its function is as follows. Catalyzes the conversion of oxaloacetate (OAA) to phosphoenolpyruvate (PEP), the rate-limiting step in the metabolic pathway that produces glucose from lactate and other precursors derived from the citric acid cycle. This chain is Phosphoenolpyruvate carboxykinase [GTP], found in Mycolicibacterium paratuberculosis (strain ATCC BAA-968 / K-10) (Mycobacterium paratuberculosis).